We begin with the raw amino-acid sequence, 363 residues long: UDP-N-acetylglucosamine--N-acetylmuramyl-(pentapeptide) pyrophosphoryl-undecaprenol N-acetylglucosamine transferase (363 aa).

UDP-N-acetyl-alpha-D-glucosamine is bound by residues 12–14 (TAG), Ser196, and Gln291.

Belongs to the glycosyltransferase 28 family. MurG subfamily.

The protein resides in the cell inner membrane. The catalysed reaction is di-trans,octa-cis-undecaprenyl diphospho-N-acetyl-alpha-D-muramoyl-L-alanyl-D-glutamyl-meso-2,6-diaminopimeloyl-D-alanyl-D-alanine + UDP-N-acetyl-alpha-D-glucosamine = di-trans,octa-cis-undecaprenyl diphospho-[N-acetyl-alpha-D-glucosaminyl-(1-&gt;4)]-N-acetyl-alpha-D-muramoyl-L-alanyl-D-glutamyl-meso-2,6-diaminopimeloyl-D-alanyl-D-alanine + UDP + H(+). It participates in cell wall biogenesis; peptidoglycan biosynthesis. Functionally, cell wall formation. Catalyzes the transfer of a GlcNAc subunit on undecaprenyl-pyrophosphoryl-MurNAc-pentapeptide (lipid intermediate I) to form undecaprenyl-pyrophosphoryl-MurNAc-(pentapeptide)GlcNAc (lipid intermediate II). This Legionella pneumophila (strain Corby) protein is UDP-N-acetylglucosamine--N-acetylmuramyl-(pentapeptide) pyrophosphoryl-undecaprenol N-acetylglucosamine transferase.